The sequence spans 300 residues: MTSKGNAGNPPTPTPAPVKSQPLWHNLVSGGIAGVSEILVMYPLDVVKTRQQLQVGKGQSMMSSLVTMVRHDGLKMYRGIVPPILVEAPKRAIKFASNKFYEKQILSYCGNTKPTQMQAIGSGVLAGITEAFIVVPFELVKIRLQAKENAGKYTSTMDCVNKTFRAEGLSGFFKGLESTIWRHACWNGGYFGLIHTIKSALPKPTTEQGVLVNNFIAGGLAGTFGTMLNTPADVVKSRIQNQVGAGKYNWCIPSILTVAREEGFSALYKGFLPKVLRLGPGGGILLVVNEFVMKLLAGKN.

Residues 1 to 20 (MTSKGNAGNPPTPTPAPVKS) are disordered. Solcar repeat units follow at residues 21–104 (QPLW…YEKQ), 114–200 (PTQM…IKSA), and 209–295 (GVLV…VMKL). Transmembrane regions (helical) follow at residues 27–47 (LVSG…LDVV), 74–93 (LKMY…KRAI), 120–140 (IGSG…FELV), 171–191 (GFFK…GGYF), 209–229 (GVLV…TMLN), and 278–298 (LGPG…LLAG).

The protein belongs to the mitochondrial carrier (TC 2.A.29) family.

It localises to the mitochondrion inner membrane. The catalysed reaction is 2-oxoadipate(in) + 2-oxoglutarate(out) = 2-oxoadipate(out) + 2-oxoglutarate(in). The enzyme catalyses hexanedioate(in) + 2-oxoglutarate(out) = hexanedioate(out) + 2-oxoglutarate(in). It catalyses the reaction L-2-aminoadipate(in) + 2-oxoglutarate(out) = L-2-aminoadipate(out) + 2-oxoglutarate(in). It carries out the reaction glutarate(in) + 2-oxoglutarate(out) = glutarate(out) + 2-oxoglutarate(in). The catalysed reaction is 2-oxoheptanedioate(in) + 2-oxoglutarate(out) = 2-oxoheptanedioate(out) + 2-oxoglutarate(in). The enzyme catalyses heptanedioate(in) + 2-oxoglutarate(out) = heptanedioate(out) + 2-oxoglutarate(in). It catalyses the reaction citrate(in) + 2-oxoglutarate(out) = citrate(out) + 2-oxoglutarate(in). Functionally, transports dicarboxylates across the inner membranes of mitochondria by a counter-exchange mechanism. Can transport 2-oxoadipate (2-oxohexanedioate), 2-oxoglutarate, adipate (hexanedioate), glutarate, and to a lesser extent, pimelate (heptanedioate), 2-oxopimelate (2-oxoheptanedioate), 2-aminoadipate (2-aminohexanedioate), oxaloacetate, and citrate. Plays a central role in catabolism of lysine, hydroxylysine, and tryptophan, by transporting common metabolite intermediates (such as 2-oxoadipate) into the mitochondria, where it is converted into acetyl-CoA and can enter the citric acid (TCA) cycle. The sequence is that of Probable mitochondrial 2-oxodicarboxylate carrier (mcfT) from Dictyostelium discoideum (Social amoeba).